Reading from the N-terminus, the 301-residue chain is E3 ubiquitin-protein ligase RNF144B (301 aa).

A TRIAD supradomain region spans residues Pro-26–Leu-242. Zn(2+)-binding residues include Cys-30, Cys-33, Cys-53, Cys-56, Cys-121, Cys-126, Cys-145, Cys-148, Cys-153, Cys-156, His-161, Cys-166, Cys-191, and Cys-194. An RING-type 1 zinc finger spans residues Cys-30 to Cys-80. An IBR-type zinc finger spans residues Gln-101 to Cys-166. An RING-type 2; atypical zinc finger spans residues Cys-191–Cys-220. The active site involves Cys-204. Cys-209, Cys-212, Cys-217, Cys-220, His-232, and Cys-238 together coordinate Zn(2+). A helical membrane pass occupies residues Val-256–Leu-276.

The protein belongs to the RBR family. RNF144 subfamily. As to quaternary structure, interacts with UBE2L3, UBE2L6 and LCMT2, as well as with BAX. Interacts with TBK1; this interaction inhibits TBK1 phosphorylation and 'Lys-63'-linked polyubiquitination. Auto-ubiquitinated.

The protein resides in the mitochondrion membrane. It is found in the cytoplasm. It catalyses the reaction [E2 ubiquitin-conjugating enzyme]-S-ubiquitinyl-L-cysteine + [acceptor protein]-L-lysine = [E2 ubiquitin-conjugating enzyme]-L-cysteine + [acceptor protein]-N(6)-ubiquitinyl-L-lysine.. It functions in the pathway protein modification; protein ubiquitination. Its function is as follows. E3 ubiquitin-protein ligase which accepts ubiquitin from E2 ubiquitin-conjugating enzymes UBE2L3 and UBE2L6 in the form of a thioester and then directly transfers the ubiquitin to targeted substrates such as LCMT2, thereby promoting their degradation. Induces apoptosis via a p53/TP53-dependent but caspase-independent mechanism. Plays a crucial role in maintaining the genomic stability by controlling the degradation of multiple proteins involved in mitotic progression and DNA damage. Regulates epithelial homeostasis by mediating degradation of CDKN1A and isoform 2 of TP63. Plays a regulatory role in innate immunity by negatively regulating IRF3 activation and IFN-beta production. Mechanistically, inhibits TBK1 phosphorylation and 'Lys-63'-linked polyubiquitination independently of its E3 ligase activity. Alternatively, promotes 'Lys-27' and 'Lys-33'-linked ubiquitination of IFIH1/MDA5, promoting selective autophagic degradation of IFIH1/MDA5 to inhibit antiviral response. This Mus musculus (Mouse) protein is E3 ubiquitin-protein ligase RNF144B (Rnf144b).